The following is a 1347-amino-acid chain: Spermatogenesis-associated protein 31A3 (1347 aa).

The helical transmembrane segment at 23–43 threads the bilayer; it reads PWVLDIFLTLVFALGFFFLLL. Disordered stretches follow at residues 55 to 87, 108 to 142, 154 to 235, 373 to 397, 627 to 658, 900 to 955, 1084 to 1161, and 1313 to 1335; these read PSPSPGKRKCPVGRRRRPRGRMKNHSLRAGREC, HLDKGDFGQLSGPDPPGEVGERAPDGASQSSHEPM, SPDP…STLI, EQDTTNPKPFWNMGENSKQLPGPQK, QDESPGTSQAKGKPSPWQSSMSTGESSKEAQK, RGIP…REAV, VHEE…PSVS, and KAVSPVSPPQHWPKTSGASSHHH. The segment covering 60–82 has biased composition (basic residues); sequence GKRKCPVGRRRRPRGRMKNHSLR. Polar residues predominate over residues 165–178; that stretch reads LASTPSPGPMTTSV. Residues 198 to 211 show a composition bias toward pro residues; sequence PEPPALFPHPPHTP. Polar residues-rich tracts occupy residues 627-651 and 927-948; these read QDESPGTSQAKGKPSPWQSSMSTGE and LTYSLTGSTQQSRSLGAQSSKA. Composition is skewed to basic and acidic residues over residues 1108-1127 and 1137-1146; these read HKSEKFRKPNLEKHEERLEG and RKTEDTHQDE.

This sequence belongs to the SPATA31 family.

It is found in the membrane. In terms of biological role, may play a role in spermatogenesis. The chain is Spermatogenesis-associated protein 31A3 (SPATA31A3) from Homo sapiens (Human).